Here is a 404-residue protein sequence, read N- to C-terminus: O-methyltransferase GME11366 (404 aa).

S-adenosyl-L-methionine-binding positions include 237–238 (GG), aspartate 262, arginine 301, and arginine 302. Histidine 305 acts as the Proton acceptor in catalysis.

Belongs to the class I-like SAM-binding methyltransferase superfamily. Cation-independent O-methyltransferase family.

Its pathway is secondary metabolite biosynthesis. In terms of biological role, O-methyltransferase; part of the gene cluster that mediates the biosynthesis of dibenzodioxocinones such as pestalotiollide B, a novel class of inhibitors against cholesterol ester transfer protein (CEPT). The biosynthesis initiates from condensation of acetate and malonate units catalyzed by the non-reducing PKS pks8/GME11356. Pks8/GME11356 lacks a thioesterase (TE) domain, which is important to the cyclizing of the third ring of atrochrysone carboxylic acid, and the esterase GME11355 might play the role of TE and catalyzes the cyclization reaction of the C ring. The lactamase-like protein GME11357 (or other beta-lactamases in Pestalotiopsis microspora) probably hydrolyzes the thioester bond between the ACP of pks8/GME11356 and the intermediate to release atrochrysone carboxylic acid, which is spontaneously dehydrates to form endocrocin anthrone. Endocrocin anthrone is further converted to emodin via the endocrocin intermediate. Emodin is then oxidized by several enzymes such as the Baeyer-Villiger oxidase GME11358, the oxidoreductase GME11367, the short chain dehydrogenase/reductase GME11373, as well as by other oxidoreductases from the cluster, to modify the A and C rings and open the B ring, and finally yield monodictyphenone. The prenyltransferase GME11375 may catalyze the addition reaction between the C5 side chains and the carbon bone of dibenzodioxocinones. The remaining biochemical reactions to the final product dibenzodioxocinones should be methylation catalyzed by methyltransferase GME11366 and reduction and lactonization reaction catalyzed by a series of oxidordeuctases. The polypeptide is O-methyltransferase GME11366 (Pestalotiopsis microspora).